A 210-amino-acid chain; its full sequence is Glutathione S-transferase P (210 aa).

The GST N-terminal domain occupies 2-81 (PPYTIVYFPV…HLGRSLGLYG (80 aa)). Position 4 is a phosphotyrosine; by EGFR (Tyr-4). Glutathione-binding positions include Tyr-8, Arg-14, Trp-39, Lys-45, and 52 to 53 (QL). Position 62 is a phosphothreonine (Thr-62). A glutathione-binding site is contributed by 65-66 (QS). A GST C-terminal domain is found at 83-204 (DQKEAALVDM…SSPDHLNRPI (122 aa)). N6-succinyllysine occurs at positions 103 and 116. Lys-128 bears the N6-acetyllysine mark.

It belongs to the GST superfamily. Pi family. Homodimer. Interacts with CDK5. As to expression, present in kidney, lung, testis and placenta, very low levels in liver.

The protein localises to the cytoplasm. Its subcellular location is the mitochondrion. The protein resides in the nucleus. The enzyme catalyses RX + glutathione = an S-substituted glutathione + a halide anion + H(+). The catalysed reaction is prostaglandin J2 + glutathione = prostaglandin J2-S-(R)-glutathione. It catalyses the reaction prostaglandin J2 + glutathione = prostaglandin J2-S-(S)-glutathione. It carries out the reaction prostaglandin A2 + glutathione = prostaglandin A2-S-(S)-glutathione. The enzyme catalyses 11(S)-hydroxy-14(S),15(S)-epoxy-(5Z,8Z,12E)-eicosatrienoate + glutathione = (11S,15S)-dihydroxy-14(R)-S-glutathionyl-(5Z,8Z,12E)-eicosatrienoate. Its function is as follows. Conjugation of reduced glutathione to a wide number of exogenous and endogenous hydrophobic electrophiles. Involved in the formation of glutathione conjugates of both prostaglandin A2 (PGA2) and prostaglandin J2 (PGJ2). Participates in the formation of novel hepoxilin regioisomers. Negatively regulates CDK5 activity via p25/p35 translocation to prevent neurodegeneration. This Rattus norvegicus (Rat) protein is Glutathione S-transferase P.